Consider the following 412-residue polypeptide: Cinnamoyl-CoA:phenyllactate CoA-transferase (412 aa).

Asparagine 102 lines the CoA pocket. The active-site Nucleophile is the aspartate 176.

In terms of assembly, homodimer. Part of the heterotrimeric phenyllactate dehydratase complex FldABC, composed of (R)-phenyllactate CoA-transferase (FldA) and a heterodimeric (R)-phenyllactyl-CoA dehydratase (FldB and FldC).

It carries out the reaction (E)-cinnamoyl-CoA + (R)-3-phenyllactate = (R)-3-phenyllactoyl-CoA + (E)-cinnamate. Its pathway is amino-acid degradation; L-phenylalanine degradation. Functionally, component of the phenyllactate dehydratase complex FldABC that is involved in the fermentation of L-phenylalanine via a Stickland reaction. This complex catalyzes the reversible syn-dehydration of (R)-phenyllactate to (E)-cinnamate in two steps, a CoA-transfer from cinnamoyl-CoA to phenyllactate, catalyzed by FldA, followed by the dehydration of phenyllactyl-CoA to cinnamoyl-CoA, catalyzed by FldB and FldC. In vitro, FldA can use 3-phenylpropanoate as a better CoA-acceptor than phenyllactate. The chain is Cinnamoyl-CoA:phenyllactate CoA-transferase from Clostridium sporogenes.